Consider the following 430-residue polypeptide: Adenylosuccinate synthetase (430 aa).

GTP contacts are provided by residues 12 to 18 (GDEGKGK) and 40 to 42 (GHT). Asp-13 functions as the Proton acceptor in the catalytic mechanism. 2 residues coordinate Mg(2+): Asp-13 and Gly-40. Residues 13 to 16 (DEGK), 38 to 41 (NAGH), Thr-130, Arg-144, Gln-224, Thr-239, and Arg-303 each bind IMP. His-41 (proton donor) is an active-site residue. Residue 299 to 305 (VNTGRKR) coordinates substrate. GTP contacts are provided by residues Arg-305, 331–333 (KLD), and 413–415 (STS).

The protein belongs to the adenylosuccinate synthetase family. In terms of assembly, homodimer. Requires Mg(2+) as cofactor.

The protein localises to the cytoplasm. It catalyses the reaction IMP + L-aspartate + GTP = N(6)-(1,2-dicarboxyethyl)-AMP + GDP + phosphate + 2 H(+). Its pathway is purine metabolism; AMP biosynthesis via de novo pathway; AMP from IMP: step 1/2. Functionally, plays an important role in the de novo pathway of purine nucleotide biosynthesis. Catalyzes the first committed step in the biosynthesis of AMP from IMP. This is Adenylosuccinate synthetase from Nitrobacter hamburgensis (strain DSM 10229 / NCIMB 13809 / X14).